The chain runs to 708 residues: Prolyl 3-hydroxylase 2 (708 aa).

An N-terminal signal peptide occupies residues 1 to 24 (MRERIWAPPLLLLLPLLLPPPLWG). TPR repeat units lie at residues 44–77 (FDLL…HRRL), 148–181 (RVPY…NPEH), 210–243 (HMES…YFVE), and 306–339 (PLHY…HPDD). Residues asparagine 449 and asparagine 549 are each glycosylated (N-linked (GlcNAc...) asparagine). A Fe2OG dioxygenase domain is found at 557 to 671 (THMVCRTALS…RCAVALWFTL (115 aa)). Positions 580, 582, and 652 each coordinate Fe cation. Residue arginine 662 is part of the active site. Positions 705–708 (KDEL) match the Prevents secretion from ER motif.

The protein belongs to the leprecan family. Requires Fe cation as cofactor. It depends on L-ascorbate as a cofactor. In terms of tissue distribution, expression localized to the epithelia of bile ducts and to the sacroplasm of heart muscle and skeletal muscle. In the pancreas, localized to a subpopulation of Langerhans islet cells and in the salivary gland, expressed in acinar cells (at protein level). Expressed in adult heart, placenta, lung, liver, skeletal muscle and kidney. Detected in fetal heart, spleen, lung, liver skeletal muscle and kidney.

The protein localises to the endoplasmic reticulum. It localises to the sarcoplasmic reticulum. It is found in the golgi apparatus. It catalyses the reaction L-prolyl-[collagen] + 2-oxoglutarate + O2 = trans-3-hydroxy-L-prolyl-[collagen] + succinate + CO2. Its activity is regulated as follows. Inhibited by pyridine 2,4-dicarboxylate, an analog of 2-oxoglutarate. Its function is as follows. Prolyl 3-hydroxylase that catalyzes the post-translational formation of 3-hydroxyproline on collagens. Contributes to proline 3-hydroxylation of collagen COL4A1 and COL1A1 in tendons, the eye sclera and in the eye lens capsule. Has high activity with the type IV collagen COL4A1, and lower activity with COL1A1. Catalyzes hydroxylation of the first Pro in Gly-Pro-Hyp sequences where Hyp is 4-hydroxyproline. Has no activity on substrates that lack 4-hydroxyproline in the third position. This Homo sapiens (Human) protein is Prolyl 3-hydroxylase 2.